We begin with the raw amino-acid sequence, 285 residues long: uncharacterized protein (285 aa).

Mn(2+)-binding residues include H110, D131, H133, D135, D214, and D216.

This sequence belongs to the arginase family. Mn(2+) is required as a cofactor.

This is an uncharacterized protein from Methanothermus fervidus.